Here is a 209-residue protein sequence, read N- to C-terminus: Probable chalcone--flavanone isomerase 3 (209 aa).

Belongs to the chalcone isomerase family.

It carries out the reaction a chalcone = a flavanone.. It functions in the pathway secondary metabolite biosynthesis; flavonoid biosynthesis. Involved in anthocyanin biosynthesis. This Arabidopsis thaliana (Mouse-ear cress) protein is Probable chalcone--flavanone isomerase 3 (CHI3).